The chain runs to 254 residues: Alcohol dehydrogenase 2 (254 aa).

10 to 33 (FVAGLGGIGFDTSREIVKSGPKNL) is an NAD(+) binding site. Residue Ser138 participates in substrate binding. The active-site Proton acceptor is the Tyr151.

This sequence belongs to the short-chain dehydrogenases/reductases (SDR) family. In terms of assembly, homodimer.

It catalyses the reaction a primary alcohol + NAD(+) = an aldehyde + NADH + H(+). It carries out the reaction a secondary alcohol + NAD(+) = a ketone + NADH + H(+). This Drosophila wheeleri (Fruit fly) protein is Alcohol dehydrogenase 2 (Adh2).